Reading from the N-terminus, the 334-residue chain is Malate dehydrogenase, cytoplasmic (334 aa).

Residue Ser-2 is modified to N-acetylserine. Residues 11-17 and Asp-42 contribute to the NAD(+) site; that span reads GAAGQIA. Substrate is bound by residues Arg-92 and Arg-98. Position 105 (Asn-105) interacts with NAD(+). An N6-succinyllysine modification is found at Lys-110. NAD(+) is bound at residue Gln-112. N6-acetyllysine occurs at positions 118 and 121. 129–131 contacts NAD(+); it reads VGN. Asn-131 and Arg-162 together coordinate substrate. His-187 (proton acceptor) is an active-site residue. Lys-214 is subject to N6-succinyllysine. Ser-217 is subject to Phosphoserine. At Arg-230 the chain carries Omega-N-methylarginine. Ser-241 is subject to Phosphoserine. Lys-298 is subject to N6-acetyllysine; alternate. Lys-298 carries the N6-succinyllysine; alternate modification. The residue at position 309 (Ser-309) is a Phosphoserine. Lys-318 bears the N6-succinyllysine mark. Phosphoserine occurs at positions 332 and 333.

This sequence belongs to the LDH/MDH superfamily. MDH type 2 family. As to quaternary structure, homodimer. In terms of processing, ISGylated. Post-translationally, acetylation at Lys-118 dramatically enhances enzymatic activity and promotes adipogenic differentiation.

The protein resides in the cytoplasm. The protein localises to the cytosol. The enzyme catalyses (S)-malate + NAD(+) = oxaloacetate + NADH + H(+). It catalyses the reaction (2R)-2-hydroxy-3-(4-hydroxyphenyl)propanoate + NAD(+) = 3-(4-hydroxyphenyl)pyruvate + NADH + H(+). The catalysed reaction is (S)-2-hydroxyglutarate + NAD(+) = 2-oxoglutarate + NADH + H(+). Catalyzes the reduction of aromatic alpha-keto acids in the presence of NADH. Plays essential roles in the malate-aspartate shuttle and the tricarboxylic acid cycle, important in mitochondrial NADH supply for oxidative phosphorylation. Catalyzes the reduction of 2-oxoglutarate to 2-hydroxyglutarate, leading to elevated reactive oxygen species (ROS). In Felis catus (Cat), this protein is Malate dehydrogenase, cytoplasmic (MDH1).